The chain runs to 148 residues: UPF0179 protein Mpal_0949 (148 aa).

The protein belongs to the UPF0179 family.

The polypeptide is UPF0179 protein Mpal_0949 (Methanosphaerula palustris (strain ATCC BAA-1556 / DSM 19958 / E1-9c)).